Here is a 127-residue protein sequence, read N- to C-terminus: Small ribosomal subunit protein uS11 (127 aa).

Belongs to the universal ribosomal protein uS11 family. Part of the 30S ribosomal subunit. Interacts with proteins S7 and S18. Binds to IF-3.

Located on the platform of the 30S subunit, it bridges several disparate RNA helices of the 16S rRNA. Forms part of the Shine-Dalgarno cleft in the 70S ribosome. The chain is Small ribosomal subunit protein uS11 from Flavobacterium johnsoniae (strain ATCC 17061 / DSM 2064 / JCM 8514 / BCRC 14874 / CCUG 350202 / NBRC 14942 / NCIMB 11054 / UW101) (Cytophaga johnsonae).